The sequence spans 509 residues: Putative thymidine phosphorylase (509 aa).

This sequence belongs to the thymidine/pyrimidine-nucleoside phosphorylase family. Type 2 subfamily.

The enzyme catalyses thymidine + phosphate = 2-deoxy-alpha-D-ribose 1-phosphate + thymine. In Bradyrhizobium sp. (strain ORS 278), this protein is Putative thymidine phosphorylase.